A 640-amino-acid chain; its full sequence is CREB3 regulatory factor (640 aa).

The disordered stretch occupies residues 308–414 (SPGLVATAES…FSEPGYENDS (107 aa)). Residues 317 to 329 (SGSLSASTSVSDS) are compositionally biased toward low complexity. Acidic residues predominate over residues 356–371 (EDDEDDEDEFDDEDHD). Residues 372-381 (EGFGSEHELS) are compositionally biased toward basic and acidic residues. Acidic residues predominate over residues 382–402 (ENEEEEEEEEDYEDDRDDDIS). Residues 522–585 (TARPRSRKEK…VNRVQNPREE (64 aa)) form the bZIP domain. A basic motif region spans residues 524 to 533 (RPRSRKEKNK). Residues 534–541 (LASRACRL) form a leucine-zipper region.

Belongs to the bZIP family. CREBRF subfamily. In terms of assembly, interacts (via leucine-zipper domain) with CREB3 (via leucine-zipper domain); the interaction promotes CREB3 degradation. Post-translationally, probably degraded by the proteasome. As to expression, highly expressed in intestin, testis, heart and kidney, weakly in brain adipose, colon, liver, lung and skeletal.

It is found in the nucleus. Its function is as follows. Acts as a negative regulator of the endoplasmic reticulum stress response or unfolded protein response (UPR). Represses the transcriptional activity of CREB3 during the UPR. Recruits CREB3 into nuclear foci. This chain is CREB3 regulatory factor (Crebrf), found in Mus musculus (Mouse).